Consider the following 124-residue polypeptide: Protein YobA (124 aa).

The signal sequence occupies residues 1–26; the sequence is MASTARSLRYALAILTTSLVTPSVWA. Residues histidine 27 and histidine 113 each coordinate Cu cation.

Belongs to the CopC family.

It localises to the periplasm. This is Protein YobA (yobA) from Escherichia coli O6:H1 (strain CFT073 / ATCC 700928 / UPEC).